The sequence spans 691 residues: DNA ligase (691 aa).

NAD(+) contacts are provided by residues 41–45, 90–91, and glutamate 130; these read DAEYD and SL. Lysine 132 serves as the catalytic N6-AMP-lysine intermediate. NAD(+)-binding residues include arginine 153, glutamate 190, lysine 307, and lysine 331. Cysteine 425, cysteine 428, cysteine 443, and cysteine 449 together coordinate Zn(2+). The 82-residue stretch at 610-691 folds into the BRCT domain; it reads APQGVLAGKT…LHQLLEGNTQ (82 aa).

The protein belongs to the NAD-dependent DNA ligase family. LigA subfamily. Mg(2+) serves as cofactor. Requires Mn(2+) as cofactor.

The enzyme catalyses NAD(+) + (deoxyribonucleotide)n-3'-hydroxyl + 5'-phospho-(deoxyribonucleotide)m = (deoxyribonucleotide)n+m + AMP + beta-nicotinamide D-nucleotide.. Functionally, DNA ligase that catalyzes the formation of phosphodiester linkages between 5'-phosphoryl and 3'-hydroxyl groups in double-stranded DNA using NAD as a coenzyme and as the energy source for the reaction. It is essential for DNA replication and repair of damaged DNA. This Burkholderia vietnamiensis (strain G4 / LMG 22486) (Burkholderia cepacia (strain R1808)) protein is DNA ligase.